A 319-amino-acid polypeptide reads, in one-letter code: G-protein coupled receptor 171 (319 aa).

The Extracellular portion of the chain corresponds to 1 to 21 (MTNSSTFCPVYRDLEPFTYFF). Asn-3 is a glycosylation site (N-linked (GlcNAc...) asparagine). Residues 22–42 (YLVFLIGIIGSCFATWAFIQK) traverse the membrane as a helical segment. At 43 to 48 (NTNHRC) the chain is on the cytoplasmic side. The chain crosses the membrane as a helical span at residues 49–69 (VSIYLINLLTADFLLTLALPV). Residues 70–89 (KITVDLGVAPWKLRIFHCQV) are Extracellular-facing. Residues 90 to 110 (TACLIYINMYLSIIFLAFVSI) traverse the membrane as a helical segment. At 111 to 132 (DRCLQLTYSCKIYRIQEPGFAK) the chain is on the cytoplasmic side. Residues 133-153 (MISAVVWLMVLLIMVPNMIIP) form a helical membrane-spanning segment. The Extracellular segment spans residues 154–181 (IKDIKEKPNVGCMEFKSEFGRNWHLLTN). The chain crosses the membrane as a helical span at residues 182–202 (FISIAIFFNFSAIILISNCLV). The Cytoplasmic segment spans residues 203–224 (IRQLYRNKDNENYPNVKRALIS). The helical transmembrane segment at 225–245 (ILLVTTGYIICFVPYHIVRIP) threads the bilayer. Residues 246–268 (YTLSQTEVISDCSTRISLFKAKE) are Extracellular-facing. Residues 269 to 289 (ATLLLAVSNLCFDPILYYHLS) form a helical membrane-spanning segment. The Cytoplasmic portion of the chain corresponds to 290 to 319 (KAFRLKITETFASHKESKAQKEKPRSENNA).

The protein belongs to the G-protein coupled receptor 1 family.

It localises to the cell membrane. G-protein coupled receptor for Big LEN, a 16-amino acid neuropeptide produced from the precursor protein, proSAAS (encoded by PCSK1N). Acts through a G(i)-alpha-mediated pathway in response to bigLEN. Big LEN-GPR171 system plays an important role in regulating feeding and metabolism. Also plays a role in modulating fear and anxiety-like behaviors in the basolateral amygdala. Big LEN-GPR171 modulates the mu-type opioid receptor signaling and antinociception. Acts as a negative regulator T cell function. In Bos taurus (Bovine), this protein is G-protein coupled receptor 171 (GPR171).